Here is a 155-residue protein sequence, read N- to C-terminus: MKNNIILVILLGISVFVDCLPLNDQEEDKSLNAQESEVSAVQKRDILQFSGMIRCATGRSAWKYFNYGNWCGWGGSGTAVDGVDSCCRSHDWCYKRHDSCYPKIIPYIASTSGSHPSCSITCHSANNRCQRDVCNCDKVAAECFARNTYHPNNKH.

Residues 1-19 (MKNNIILVILLGISVFVDC) form the signal peptide. A propeptide spanning residues 20–42 (LPLNDQEEDKSLNAQESEVSAVQ) is cleaved from the precursor. Disulfide bonds link Cys55–Cys118, Cys71–Cys87, Cys86–Cys143, Cys93–Cys136, Cys100–Cys129, and Cys122–Cys134. Ca(2+) is bound by residues Gly72 and Gly74. Residue His90 is part of the active site. Position 91 (Asp91) interacts with Ca(2+). Asp137 is an active-site residue.

Belongs to the phospholipase A2 family. Ca(2+) serves as cofactor.

The protein resides in the secreted. It is found in the nematocyst. It carries out the reaction a 1,2-diacyl-sn-glycero-3-phosphocholine + H2O = a 1-acyl-sn-glycero-3-phosphocholine + a fatty acid + H(+). PLA2 catalyzes the calcium-dependent hydrolysis of the 2-acyl groups in 3-sn-phosphoglycerides. The chain is Phospholipase A2 A2-actitoxin-Ucs2a from Urticina crassicornis (Mottled anemone).